Reading from the N-terminus, the 103-residue chain is Nematocin (103 aa).

The N-terminal stretch at 1–19 is a signal peptide; that stretch reads MGSSPILLVLAISIGLASA. A disulfide bond links Cys-20 and Cys-25. At Tyr-30 the chain carries Tyrosine amide. Residues 31-103 constitute a propeptide that is removed on maturation; it reads GRTIRCSSCG…QGGCQTSAMC (73 aa).

It belongs to the vasopressin/oxytocin family. Detected in thermosensory AFD neurons, neurosecretory NSM cells, AVK interneurons, pharyngeal neuron M5, and the mechanosensory DVA neuron. Detected in male-specific CP motor neurons.

It is found in the secreted. Functionally, ligand for the G-protein coupled receptor ntr-1. Plays a role in gustatory associative learning. Also plays a role in male mating behavior. This is Nematocin from Caenorhabditis elegans.